We begin with the raw amino-acid sequence, 223 residues long: RNA-free ribonuclease P (223 aa).

This sequence belongs to the HARP family.

It carries out the reaction Endonucleolytic cleavage of RNA, removing 5'-extranucleotides from tRNA precursor.. Functionally, RNA-free RNase P that catalyzes the removal of the 5'-leader sequence from pre-tRNA to produce the mature 5'-terminus. The sequence is that of RNA-free ribonuclease P from Methanococcus maripaludis (strain C5 / ATCC BAA-1333).